Consider the following 313-residue polypeptide: Carbamate kinase 2 (313 aa).

This sequence belongs to the carbamate kinase family.

It localises to the cytoplasm. It catalyses the reaction hydrogencarbonate + NH4(+) + ATP = carbamoyl phosphate + ADP + H2O + H(+). Its pathway is metabolic intermediate metabolism; carbamoyl phosphate degradation; CO(2) and NH(3) from carbamoyl phosphate: step 1/1. This is Carbamate kinase 2 (arcC2) from Staphylococcus aureus (strain bovine RF122 / ET3-1).